We begin with the raw amino-acid sequence, 158 residues long: 6,7-dimethyl-8-ribityllumazine synthase (158 aa).

Residues Phe-23, 61 to 63 (SFE), and 85 to 87 (AVI) each bind 5-amino-6-(D-ribitylamino)uracil. 90 to 91 (ET) is a binding site for (2S)-2-hydroxy-3-oxobutyl phosphate. Catalysis depends on His-93, which acts as the Proton donor. 5-amino-6-(D-ribitylamino)uracil is bound at residue Phe-118. Position 132 (Arg-132) interacts with (2S)-2-hydroxy-3-oxobutyl phosphate.

The protein belongs to the DMRL synthase family.

It carries out the reaction (2S)-2-hydroxy-3-oxobutyl phosphate + 5-amino-6-(D-ribitylamino)uracil = 6,7-dimethyl-8-(1-D-ribityl)lumazine + phosphate + 2 H2O + H(+). It functions in the pathway cofactor biosynthesis; riboflavin biosynthesis; riboflavin from 2-hydroxy-3-oxobutyl phosphate and 5-amino-6-(D-ribitylamino)uracil: step 1/2. Its function is as follows. Catalyzes the formation of 6,7-dimethyl-8-ribityllumazine by condensation of 5-amino-6-(D-ribitylamino)uracil with 3,4-dihydroxy-2-butanone 4-phosphate. This is the penultimate step in the biosynthesis of riboflavin. The polypeptide is 6,7-dimethyl-8-ribityllumazine synthase (Prochlorococcus marinus (strain AS9601)).